Here is a 477-residue protein sequence, read N- to C-terminus: Aspartyl/glutamyl-tRNA(Asn/Gln) amidotransferase subunit B (477 aa).

This sequence belongs to the GatB/GatE family. GatB subfamily. Heterotrimer of A, B and C subunits.

It catalyses the reaction L-glutamyl-tRNA(Gln) + L-glutamine + ATP + H2O = L-glutaminyl-tRNA(Gln) + L-glutamate + ADP + phosphate + H(+). The enzyme catalyses L-aspartyl-tRNA(Asn) + L-glutamine + ATP + H2O = L-asparaginyl-tRNA(Asn) + L-glutamate + ADP + phosphate + 2 H(+). Allows the formation of correctly charged Asn-tRNA(Asn) or Gln-tRNA(Gln) through the transamidation of misacylated Asp-tRNA(Asn) or Glu-tRNA(Gln) in organisms which lack either or both of asparaginyl-tRNA or glutaminyl-tRNA synthetases. The reaction takes place in the presence of glutamine and ATP through an activated phospho-Asp-tRNA(Asn) or phospho-Glu-tRNA(Gln). In Thioalkalivibrio sulfidiphilus (strain HL-EbGR7), this protein is Aspartyl/glutamyl-tRNA(Asn/Gln) amidotransferase subunit B.